Reading from the N-terminus, the 196-residue chain is Putative lipopolysaccharide biosynthesis O-acetyl transferase WbbJ (196 aa).

This sequence belongs to the transferase hexapeptide repeat family.

It participates in bacterial outer membrane biogenesis; lipopolysaccharide biosynthesis. Its function is as follows. Putative O-acetyltransferase that transfers an O-acetyl group to the O antigen. In Escherichia coli (strain K12), this protein is Putative lipopolysaccharide biosynthesis O-acetyl transferase WbbJ (wbbJ).